Here is an 88-residue protein sequence, read N- to C-terminus: Protein transport protein SBH2 (88 aa).

The tract at residues 1–42 is disordered; sequence MAASVPPGGQRILQKRRQAQSIKEKQAKQTPTSTRQAGYGGS. Topologically, residues 1 to 61 are cytoplasmic; sequence MAASVPPGGQ…DEANGFRVDS (61 aa). A compositionally biased stretch (polar residues) spans 28-42; the sequence is KQTPTSTRQAGYGGS. The chain crosses the membrane as a helical span at residues 62 to 82; the sequence is LVVLFLSVGFIFSVIALHLLT.

This sequence belongs to the SEC61-beta family. In terms of assembly, component of the heterotrimeric Ssh1 complex, which is composed of SSH1, SBH2 and SSS1.

The protein localises to the endoplasmic reticulum membrane. Its function is as follows. Part of the Ssh1 complex, which probably is the major component of a channel-forming translocon complex that may function exclusively in the cotranslational pathway of protein endoplasmic reticulum (ER) import. The polypeptide is Protein transport protein SBH2 (SBH2) (Saccharomyces cerevisiae (strain ATCC 204508 / S288c) (Baker's yeast)).